The chain runs to 388 residues: Pentatricopeptide repeat-containing protein 2, mitochondrial (388 aa).

A PPR repeat occupies 166–200 (TSFNILMDMLFIKGKYKSALQVLIEMKNQDVKFTK). Residue S382 is modified to Phosphoserine.

This sequence belongs to the PTCD2 family.

The protein resides in the mitochondrion. Its function is as follows. Involved in mitochondrial RNA maturation and mitochondrial respiratory chain function. This chain is Pentatricopeptide repeat-containing protein 2, mitochondrial (PTCD2), found in Homo sapiens (Human).